We begin with the raw amino-acid sequence, 451 residues long: Chromosomal replication initiator protein DnaA (451 aa).

Residues 1–71 form a domain I, interacts with DnaA modulators region; the sequence is MSEKEIWDKV…QAIIYDVIGY (71 aa). The interval 71-112 is domain II; sequence YEVKPHFISEDELASYNNVNTQEVQEPQVQHSSIDDKTWGKE. The segment at 113–329 is domain III, AAA+ region; sequence QFNMHNTFDT…GALTRLLAYS (217 aa). 4 residues coordinate ATP: glycine 157, glycine 159, lysine 160, and threonine 161. The segment at 330-451 is domain IV, binds dsDNA; the sequence is KLQGKPITTE…ENLEKEIRNQ (122 aa).

The protein belongs to the DnaA family. Oligomerizes as a right-handed, spiral filament on DNA at oriC.

The protein localises to the cytoplasm. Functionally, plays an essential role in the initiation and regulation of chromosomal replication. ATP-DnaA binds to the origin of replication (oriC) to initiate formation of the DNA replication initiation complex once per cell cycle. Binds the DnaA box (a 9 base pair repeat at the origin) and separates the double-stranded (ds)DNA. Forms a right-handed helical filament on oriC DNA; dsDNA binds to the exterior of the filament while single-stranded (ss)DNA is stabiized in the filament's interior. The ATP-DnaA-oriC complex binds and stabilizes one strand of the AT-rich DNA unwinding element (DUE), permitting loading of DNA polymerase. After initiation quickly degrades to an ADP-DnaA complex that is not apt for DNA replication. Binds acidic phospholipids. This Staphylococcus epidermidis (strain ATCC 12228 / FDA PCI 1200) protein is Chromosomal replication initiator protein DnaA.